Here is an 887-residue protein sequence, read N- to C-terminus: Pre-mRNA-splicing factor cwf22 (887 aa).

The interval 1 to 27 (MEKEDKSFGIGMLDYNRENPESSGHSR) is disordered. One can recognise an MIF4G domain in the interval 124–307 (KKSINGLINK…EVLFQTRKDK (184 aa)). Residues 366 to 401 (ILGEEDDDENEEDEEDSEETSESEEDESVNDEKPQV) form a disordered region. Positions 368 to 394 (GEEDDDENEEDEEDSEETSESEEDESV) are enriched in acidic residues. Residues 411–527 (NLRKSIYLTI…GWEVYDCVRL (117 aa)) form the MI domain. Disordered regions lie at residues 607 to 834 (MPKS…KTYH) and 867 to 887 (GELYKDRNSESDSVRKQPRAD). Residues 618 to 662 (EGYSSGSETGSTYSSSYSSTYSRGRSYSRSTRSYSKSRSYSRSRS) show a composition bias toward low complexity. A Phosphoserine modification is found at Ser662. Thr664 is subject to Phosphothreonine. The segment covering 677–690 (KDRELSPRGRERSS) has biased composition (basic and acidic residues). A compositionally biased stretch (low complexity) spans 691–712 (NRNSYSDLSRSSSLSRGRSRSY). A compositionally biased stretch (basic and acidic residues) spans 717-726 (RLIESEDKGY). Positions 736–746 (RKYRSRQRYRR) are enriched in basic residues. 2 stretches are compositionally biased toward low complexity: residues 747-762 (SYAGSTSRGRSFSRSP) and 769-791 (SMSCSVSYSRSPSPAARPISRSP). The segment covering 799–809 (DSLSYNRQYSP) has biased composition (polar residues).

It belongs to the CWC22 family. As to quaternary structure, belongs to the 40S cdc5-associated complex (or cwf complex), a spliceosome sub-complex reminiscent of a late-stage spliceosome composed of the U2, U5 and U6 snRNAs and at least brr2, cdc5, cwf2/prp3, cwf3/syf1, cwf4/syf3, cwf5/ecm2, spp42/cwf6, cwf7/spf27, cwf8, cwf9, cwf10, cwf11, cwf12, prp45/cwf13, cwf14, cwf15, cwf16, cwf17, cwf18, cwf19, cwf20, cwf21, cwf22, cwf23, cwf24, cwf25, cwf26, cyp7/cwf27, cwf28, cwf29/ist3, lea1, msl1, prp5/cwf1, prp10, prp12/sap130, prp17, prp22, sap61, sap62, sap114, sap145, slu7, smb1, smd1, smd3, smf1, smg1 and syf2.

It is found in the cytoplasm. The protein resides in the nucleus. Functionally, may be involved in pre-mRNA splicing. This is Pre-mRNA-splicing factor cwf22 (cwf22) from Schizosaccharomyces pombe (strain 972 / ATCC 24843) (Fission yeast).